The chain runs to 139 residues: D-ribose pyranase (139 aa).

Histidine 20 acts as the Proton donor in catalysis. Substrate contacts are provided by residues aspartate 28, histidine 106, and 128 to 130 (YAN).

It belongs to the RbsD / FucU family. RbsD subfamily. As to quaternary structure, homodecamer.

The protein localises to the cytoplasm. The catalysed reaction is beta-D-ribopyranose = beta-D-ribofuranose. It functions in the pathway carbohydrate metabolism; D-ribose degradation; D-ribose 5-phosphate from beta-D-ribopyranose: step 1/2. Its function is as follows. Catalyzes the interconversion of beta-pyran and beta-furan forms of D-ribose. In Salmonella typhi, this protein is D-ribose pyranase.